A 247-amino-acid polypeptide reads, in one-letter code: 2-dehydro-3-deoxy-phosphogluconate aldolase (247 aa).

Belongs to the DagF family.

The catalysed reaction is 2-dehydro-3-deoxy-6-phospho-D-gluconate = D-glyceraldehyde 3-phosphate + pyruvate. Involved in the catabolism of D-glucosaminate. Catalyzes the conversion of keto-3-deoxygluconate 6-phosphate (KDGP) to yield pyruvate and glyceraldehyde-3-phosphate. This chain is 2-dehydro-3-deoxy-phosphogluconate aldolase, found in Salmonella typhimurium (strain 14028s / SGSC 2262).